The following is an 836-amino-acid chain: Protein translocase subunit SecA (836 aa).

ATP is bound by residues Gln-85, 103–107 (GEGKT), and Asp-492. Residues Cys-820, Cys-822, Cys-831, and Cys-832 each contribute to the Zn(2+) site.

It belongs to the SecA family. As to quaternary structure, monomer and homodimer. Part of the essential Sec protein translocation apparatus which comprises SecA, SecYEG and auxiliary proteins SecDF. Other proteins may also be involved. Zn(2+) is required as a cofactor.

It is found in the cell membrane. Its subcellular location is the cytoplasm. It catalyses the reaction ATP + H2O + cellular proteinSide 1 = ADP + phosphate + cellular proteinSide 2.. Part of the Sec protein translocase complex. Interacts with the SecYEG preprotein conducting channel. Has a central role in coupling the hydrolysis of ATP to the transfer of proteins into and across the cell membrane, serving as an ATP-driven molecular motor driving the stepwise translocation of polypeptide chains across the membrane. The sequence is that of Protein translocase subunit SecA from Clostridium botulinum (strain Eklund 17B / Type B).